We begin with the raw amino-acid sequence, 254 residues long: Precorrin-3B C(17)-methyltransferase (254 aa).

The protein belongs to the precorrin methyltransferase family.

The enzyme catalyses precorrin-3B + S-adenosyl-L-methionine = precorrin-4 + S-adenosyl-L-homocysteine + 3 H(+). Its pathway is cofactor biosynthesis; adenosylcobalamin biosynthesis; cob(II)yrinate a,c-diamide from precorrin-2 (aerobic route): step 3/10. Functionally, methyltransferase that catalyzes the methylation of C-17 in precorrin-3B to form precorrin-4. This chain is Precorrin-3B C(17)-methyltransferase (cobJ), found in Sinorhizobium sp.